The chain runs to 321 residues: Chemotaxis protein CheV1 (321 aa).

A CheW-like domain is found at 19 to 177 (ELQLLCFRLG…IEKMLIDVFP (159 aa)). The Response regulatory domain maps to 198–319 (CVLLADDSPS…IQRVVKQFLE (122 aa)). D252 is modified (4-aspartylphosphate).

Functionally, plays an essential role in chemotaxis signal transduction system in order to colonize the host stomach. May act as a phosphate sink to control the flow of phosphate to CheAY. The sequence is that of Chemotaxis protein CheV1 from Helicobacter pylori (strain ATCC 700392 / 26695) (Campylobacter pylori).